The chain runs to 340 residues: Putative D-lactate dehydrogenase (340 aa).

Residues 153–154, aspartate 174, 206–207, 233–235, and aspartate 259 contribute to the NAD(+) site; these read NI, TP, and VSR. Arginine 235 is an active-site residue. Residue glutamate 264 is part of the active site. Histidine 296 acts as the Proton donor in catalysis.

Belongs to the D-isomer specific 2-hydroxyacid dehydrogenase family.

It carries out the reaction (R)-lactate + NAD(+) = pyruvate + NADH + H(+). In Dictyostelium discoideum (Social amoeba), this protein is Putative D-lactate dehydrogenase (ldhA).